A 421-amino-acid polypeptide reads, in one-letter code: C4-dicarboxylate transport protein (421 aa).

Helical transmembrane passes span 9–29, 39–59, 76–96, 145–165, 185–205, 219–239, 316–336, and 348–368; these read VQVITAVIIGVIVGLVWPDVG, FINAVKMVIAPIIFFTIVLGI, FIYFEVVTTLALIIGLFVVNI, GDILQVLFFSILFGVGLAALG, IIGYIMRAAPIGAFGAMAYTI, LMMSVYITMFLFVFVALNIIC, VFGVDLSIGQQITIILVLMLT, and FIVLASTLSALQVIPLEGLAL.

Belongs to the dicarboxylate/amino acid:cation symporter (DAACS) (TC 2.A.23) family.

It localises to the cell membrane. Its function is as follows. Responsible for the transport of succinate and fumarate, but not malate, across the membrane. This Bacillus subtilis (strain 168) protein is C4-dicarboxylate transport protein (dctA).